The following is a 496-amino-acid chain: Probable cytosol aminopeptidase (496 aa).

Lys267 and Asp272 together coordinate Mn(2+). Residue Lys279 is part of the active site. Residues Asp290, Asp349, and Glu351 each contribute to the Mn(2+) site. Arg353 is an active-site residue.

It belongs to the peptidase M17 family. Requires Mn(2+) as cofactor.

It is found in the cytoplasm. The catalysed reaction is Release of an N-terminal amino acid, Xaa-|-Yaa-, in which Xaa is preferably Leu, but may be other amino acids including Pro although not Arg or Lys, and Yaa may be Pro. Amino acid amides and methyl esters are also readily hydrolyzed, but rates on arylamides are exceedingly low.. It carries out the reaction Release of an N-terminal amino acid, preferentially leucine, but not glutamic or aspartic acids.. Its function is as follows. Presumably involved in the processing and regular turnover of intracellular proteins. Catalyzes the removal of unsubstituted N-terminal amino acids from various peptides. This Methylobacillus flagellatus (strain ATCC 51484 / DSM 6875 / VKM B-1610 / KT) protein is Probable cytosol aminopeptidase.